Here is a 177-residue protein sequence, read N- to C-terminus: Large ribosomal subunit protein uL6 (177 aa).

Belongs to the universal ribosomal protein uL6 family. In terms of assembly, part of the 50S ribosomal subunit.

In terms of biological role, this protein binds to the 23S rRNA, and is important in its secondary structure. It is located near the subunit interface in the base of the L7/L12 stalk, and near the tRNA binding site of the peptidyltransferase center. This Klebsiella pneumoniae (strain 342) protein is Large ribosomal subunit protein uL6.